We begin with the raw amino-acid sequence, 355 residues long: MDKYLIKLPNKNINDMVSDKKEVVKKETPKMTGRQAKKDTPKQEKEKENTQEDNTPKQNKAGRTGRSSIKRKNLDTPEVTQEKESVESENPPKRRSTRTTRSTRSMADGGTPSPEKEKPEKLPFIKYKGAIKYYTESQDIAASADDVMQWVEKQKEDVVPMAFDMEWPFSFQTGPGKSSVIQICVDEKCCYIYQLTNLKKLPSALVALINHPKVRLHGVNIKADFRKLQRDFPEVSADALIEKCVDLGVWCNVICQTGGRWSLERLANFICRKAMDKSKKVRMSKWHVIPLDENQLMYAAIDVYIGQVIYRDLEQREKTKLANEEKFKEENGETAFKAVKALGEKFLSKMNEVTL.

Residues 1-121 are disordered; sequence MDKYLIKLPN…PSPEKEKPEK (121 aa). 3 stretches are compositionally biased toward basic and acidic residues: residues 17 to 29, 36 to 50, and 72 to 92; these read VSDK…KETP, AKKD…KENT, and KNLD…ENPP. Residues serine 105 and serine 113 each carry the phosphoserine modification. Residues 147–315 form the 3'-5' exonuclease domain; that stretch reads VMQWVEKQKE…GQVIYRDLEQ (169 aa). 3 residues coordinate Mg(2+): aspartate 164, glutamate 166, and aspartate 302.

Belongs to the WRNexo family.

Its subcellular location is the nucleus. Functionally, has exonuclease activity on both single-stranded and duplex templates bearing overhangs, but not blunt ended duplex DNA, and cleaves in a 3'-5' direction. Essential for the formation of DNA replication focal centers. Has an important role in maintaining genome stability. The polypeptide is 3'-5' exonuclease (Drosophila ananassae (Fruit fly)).